Reading from the N-terminus, the 476-residue chain is MKRVLVLLLALAFGHALERGRDYEKDKVCNELAMLGKEDFRSLSLILYSRKFSSSTFEQVNQLVKEVVSLTEECCAEGADPTCYDTRTSELSVKSCESDAPFPVHPGTPECCTKEGLERKLCMAALSHQPQEFPTYVEPTNDEICEAFRRDPKGFADQFLYEYSSNYGQAPLPLLVAYTKNYLSMVGSCCTSANPTVCFVKERLQMKHLSLLTTMSNRVCSQYAAYGKEKSRLSHLIKLAQKVPTANLENVLPLAEDFTEILSRCCESTSEDCMASELPEHTIKICQNLSKKNSKFEECCQENTPMNIFMCTYFMPAAEPLQLPAIKLPTGKDLCGQSTTQAMDQYTFELSRRTQVPEVFLSKVLEPTLKTLRECCDTQDSVACFSTQSPLLKRQLTSFIEKGQEMCADYSENTFTEYKKKLAERLRTKTPNTSPAELKDMVEKHSDFASKCCSINSPPLYCSSQIDAEMIDTLQS.

Residues 1–16 form the signal peptide; the sequence is MKRVLVLLLALAFGHA. Albumin domains are found at residues 17 to 208, 209 to 394, and 395 to 476; these read LERG…QMKH, LSLL…LLKR, and QLTS…TLQS. Intrachain disulfides connect C29–C75, C74–C83, C96–C112, C111–C122, C145–C190, C189–C198, C220–C266, C265–C273, C286–C300, C299–C311, C335–C376, C375–C384, C407–C453, and C452–C462. N-linked (GlcNAc...) asparagine glycosylation occurs at N288. S434 is subject to Phosphoserine.

It belongs to the ALB/AFP/VDB family. Associates with membrane-bound immunoglobulin on the surface of B-lymphocytes and with IgG Fc receptor on the membranes of T-lymphocytes. Interacts with LRP2; the interaction is required for renal uptake of GC in complex with 25-hydroxyvitamin D3.

It localises to the secreted. Functionally, involved in vitamin D transport and storage, scavenging of extracellular G-actin, enhancement of the chemotactic activity of C5 alpha for neutrophils in inflammation and macrophage activation. This is Vitamin D-binding protein (Gc) from Mus musculus (Mouse).